The sequence spans 1308 residues: MATPEKWRKYLEDYIPCSFPTFLDNEGADSKSFASVLVRLEHPYGRLMSFSNNCGVDVAVVLNVAWGIVLQAYTGQDATCFAVIAESNLNIRPCRIRFTSDKVVSDILSACQSPCSEKTGDHDIPASHLSQDGGFLASEFFNTCIWGPMQGSQMTSETQAADMNRNALNLFDLVTRVEVPRVEVDKSITRITLTYKRGLMREHQALAVAKAMERAISEIISGKERLDQFCLLTSEDRRQMSLWNMNLSDNSDARIETLIHEWCRRTPSAVAVCGWDGDFSYKELNELSTGVKHDLRHLGIGPEVFVPILFEKSRWAVIAMLGVMKAGGAFILLDPAHPPKRLRSICDKVSARLVVSSVQQADLAAGLAGHVVIVGGEVATAGMAQHVGEHDDSMDCIAAPHNALYAVFTSGSTGTPKGVVNSHSSFLAAMPVYLKALELDNNSRVFQFASYAFDVTIFDALMTLVAGGCVCVLSNADRSSDLTSAIQHFGTTHLSVTPTVARILDPQDFPSLKTIVLGGELSASDELLKWVNNVRVIRLYGASECTVMSIQCTSGPASSIKTINYETGNCCWVVNPQNHEQLRPLGAVGELLVEGAVVGRGYLDDASQTSETFIEAPAWLQELRQGSSTVYKSGDLVRIAADKSVQFVCRKSTQVKLRGQRIELGEVEHHVRLAIPSATECVVELITIPDASRPPMLMAFVLSDTDASTSSITARRNATSDAVFAEPSASFRSQIASITSKLRDALPSYMVPSVILPLRIMPLTGTDKINRKLLRQLAAALSREDLQLYQAQQTTYRAPSNDIEEAFQRFFAQALGLSLDQIGADDHFFSLGGDSLTAMRLAAMARKAKFDLTVQNVFDHPELSELARHTKLVADESQEFPQPFTLIAGSKQGIVRDAARQCRLPSRVIEDVYPCTPLQKGLLAETMRDAAAFVAKIEVPLPRDVDLDRLRQAWAAVAKANPILRTRMIFSPSYGMLQVVVREDVPWIESDEVESQELVVVGRSLVQLILRRRPSTALFLHIHHAVYDGYSLPLMFAQLNNAYHGETLAFRPASAFIRYLATMPDATDYWQSMCQGLESPSFPALPHPSHRPHPDSKATHTVCVASPHAREYTPNTHVRLAWAITQAHEQGLLDVFYGTVVSGRNAPVDQIESMLIPTVATVPCRITLDVDSPVRKILHRIQDVATRGIPFEQIGLAEISHLGKDAAHACSFQTLLLMQPTAVEQNENDFFNTSTSDANYRADATYAINLFCTLENQDLSVTALYDGNIVSTDTMQRLLQNLGKSMQEIHAAPRTLIGDILKSLHSRL.

An adenylation (A) domain region spans residues 261–658 (EWCRRTPSAV…CRKSTQVKLR (398 aa)). The region spanning 803–871 (IEEAFQRFFA…ELSELARHTK (69 aa)) is the Carrier domain. Ser-835 is modified (O-(pantetheine 4'-phosphoryl)serine). Positions 910–1299 (EDVYPCTPLQ…HAAPRTLIGD (390 aa)) are condensation (C) domain.

This sequence belongs to the NRP synthetase family.

It participates in alkaloid biosynthesis; ergot alkaloid biosynthesis. In terms of biological role, D-lysergyl-peptide-synthetase subunit 2; part of the gene cluster that mediates the biosynthesis of fungal ergot alkaloid. DmaW catalyzes the first step of ergot alkaloid biosynthesis by condensing dimethylallyl diphosphate (DMAP) and tryptophan to form 4-dimethylallyl-L-tryptophan. The second step is catalyzed by the methyltransferase easF that methylates 4-dimethylallyl-L-tryptophan in the presence of S-adenosyl-L-methionine, resulting in the formation of 4-dimethylallyl-L-abrine. The catalase easC and the FAD-dependent oxidoreductase easE then transform 4-dimethylallyl-L-abrine to chanoclavine-I which is further oxidized by EasD in the presence of NAD(+), resulting in the formation of chanoclavine-I aldehyde. Agroclavine dehydrogenase easG then mediates the conversion of chanoclavine-I aldehyde to agroclavine via a non-enzymatic adduct reaction: the substrate is an iminium intermediate that is formed spontaneously from chanoclavine-I aldehyde in the presence of glutathione. The presence of easA is not required to complete this reaction. Further conversion of agroclavine to paspalic acid is a two-step process involving oxidation of agroclavine to elymoclavine and of elymoclavine to paspalic acid, the second step being performed by the elymoclavine oxidase cloA. Paspalic acid is then further converted to D-lysergic acid. Ergopeptines are assembled from D-lysergic acid and three different amino acids by the D-lysergyl-peptide-synthetases composed each of a monomudular and a trimodular nonribosomal peptide synthetase subunit. LpsB and lpsC encode the monomodular subunits responsible for D-lysergic acid activation and incorporation into the ergopeptine backbone. LpsA1 and A2 subunits encode the trimodular nonribosomal peptide synthetase assembling the tripeptide portion of ergopeptines. LpsA1 is responsible for formation of the major ergopeptine, ergotamine, and lpsA2 for alpha-ergocryptine, the minor ergopeptine of the total alkaloid mixture elaborated by C.purpurea. D-lysergyl-tripeptides are assembled by the nonribosomal peptide synthetases and released as N-(D-lysergyl-aminoacyl)-lactams. Cyclolization of the D-lysergyl-tripeptides is performed by the Fe(2+)/2-ketoglutarate-dependent dioxygenase easH which introduces a hydroxyl group into N-(D-lysergyl-aminoacyl)-lactam at alpha-C of the aminoacyl residue followed by spontaneous condensation with the terminal lactam carbonyl group. The polypeptide is D-lysergyl-peptide-synthetase subunit 2 (Claviceps purpurea (Ergot fungus)).